Consider the following 295-residue polypeptide: Glutamyl-Q tRNA(Asp) synthetase (295 aa).

Residues 9 to 13 (RFAPT) and E45 contribute to the L-glutamate site. A 'HIGH' region motif is present at residues 12–22 (PTPSGYLHFGS). Positions 101, 103, 115, and 119 each coordinate Zn(2+). Residues Y172 and R190 each contribute to the L-glutamate site. The 'KMSKS' region signature appears at 228-232 (KLGKS). K231 contributes to the ATP binding site.

It belongs to the class-I aminoacyl-tRNA synthetase family. GluQ subfamily. It depends on Zn(2+) as a cofactor.

In terms of biological role, catalyzes the tRNA-independent activation of glutamate in presence of ATP and the subsequent transfer of glutamate onto a tRNA(Asp). Glutamate is transferred on the 2-amino-5-(4,5-dihydroxy-2-cyclopenten-1-yl) moiety of the queuosine in the wobble position of the QUC anticodon. In Pseudomonas syringae pv. tomato (strain ATCC BAA-871 / DC3000), this protein is Glutamyl-Q tRNA(Asp) synthetase.